A 119-amino-acid chain; its full sequence is Achromolysin (119 aa).

It belongs to the peptidase M4 family. Ca(2+) serves as cofactor. The cofactor is Zn(2+).

The protein resides in the secreted. In terms of biological role, has staphylolytic activity. In Achromobacter lyticus, this protein is Achromolysin.